Reading from the N-terminus, the 335-residue chain is Peflin (335 aa).

The span at 23–37 shows a compositional bias: basic and acidic residues; the sequence is AMEETRREFEKEKQR. The tract at residues 23-92 is disordered; it reads AMEETRREFE…SPRHTKTPVD (70 aa). A compositionally biased stretch (polar residues) spans 43 to 53; sequence VTQAQTPNTRV. EF-hand domains lie at 144–192, 198–223, 224–259, 260–300, and 301–332; these read KVAP…DDNS, SVDA…IALY, KRVK…LGYL, IPFE…LMRL, and TKLF…LGRF. Ca(2+)-binding residues include aspartate 170, arginine 176, and glutamate 181. Ca(2+) contacts are provided by aspartate 237, asparagine 239, serine 241, threonine 243, and glutamate 248.

Homodimer.

It is found in the cytoplasm. The protein localises to the nucleus. The protein resides in the bud tip. Its subcellular location is the bud neck. Its function is as follows. Calcium-binding protein that is required for polar bud growth and cell wall abscission. Can also bind zinc ions. The chain is Peflin (PEF1) from Saccharomyces cerevisiae (strain ATCC 204508 / S288c) (Baker's yeast).